Consider the following 208-residue polypeptide: MKTYQGTHGVHILEYQSKINKLLCYLTNRYPRLIAVRVDLHYPKIVDNGDNICCFPNLEPGVISRMRESLRAKLEADRTRKVREDKRIYRCPLFIIWAKEYSESGKCHYHICLLFNKDAYYHLGDYDQDDNLRGMITGAWYSALRLERDDHPGLVHFPENCKYVLDTNSTDFQQNYQALLTRLDYLTKVESKVFGEGDRNFGCSQIEL.

It to E.coli YfjJ.

This is an uncharacterized protein from Escherichia coli (strain K12).